Reading from the N-terminus, the 301-residue chain is N-acetylmuramic acid 6-phosphate etherase (301 aa).

The region spanning Val-57–Lys-220 is the SIS domain. Glu-85 (proton donor) is an active-site residue. Residue Glu-116 is part of the active site.

This sequence belongs to the GCKR-like family. MurNAc-6-P etherase subfamily. As to quaternary structure, homodimer.

The enzyme catalyses N-acetyl-D-muramate 6-phosphate + H2O = N-acetyl-D-glucosamine 6-phosphate + (R)-lactate. It functions in the pathway amino-sugar metabolism; N-acetylmuramate degradation. In terms of biological role, specifically catalyzes the cleavage of the D-lactyl ether substituent of MurNAc 6-phosphate, producing GlcNAc 6-phosphate and D-lactate. This Rubrobacter xylanophilus (strain DSM 9941 / JCM 11954 / NBRC 16129 / PRD-1) protein is N-acetylmuramic acid 6-phosphate etherase.